Here is a 240-residue protein sequence, read N- to C-terminus: 2-C-methyl-D-erythritol 2,4-cyclodiphosphate synthase, apicoplast (240 aa).

The a divalent metal cation site is built by aspartate 71 and histidine 73. Residues 71–73 (DIH) and 115–116 (HS) each bind 4-CDP-2-C-methyl-D-erythritol 2-phosphate. Histidine 123 contributes to the a divalent metal cation binding site. 4-CDP-2-C-methyl-D-erythritol 2-phosphate-binding positions include 137-139 (DIG), 142-146 (FPDKD), 181-187 (AQVPKIS), and 212-214 (GKT).

This sequence belongs to the IspF family. Homotrimer. A divalent metal cation serves as cofactor.

It is found in the plastid. Its subcellular location is the apicoplast. The enzyme catalyses 4-CDP-2-C-methyl-D-erythritol 2-phosphate = 2-C-methyl-D-erythritol 2,4-cyclic diphosphate + CMP. Its pathway is isoprenoid biosynthesis; isopentenyl diphosphate biosynthesis via DXP pathway; isopentenyl diphosphate from 1-deoxy-D-xylulose 5-phosphate: step 4/6. Functionally, in the mevalonate-independent isoprenoid biosynthetic pathway, converts 4-diphosphocytidyl-2C-methyl-D-erythritol 2-phosphate into 2C-methyl-D-erythritol 2,4-cyclodiphosphate and CMP. The chain is 2-C-methyl-D-erythritol 2,4-cyclodiphosphate synthase, apicoplast from Plasmodium falciparum (isolate 3D7).